A 1035-amino-acid polypeptide reads, in one-letter code: NHS-like protein 3 (1035 aa).

Valine 2 carries the N-myristoyl glycine lipid modification. 3 disordered regions span residues 23–44 (KAENDKHLSVGPGQGPGSAVDE), 76–105 (QEKQKLNKGGWDHGDTQSIQSSRTGPDEDN), and 133–162 (IQRKGSTFRPHDSFPKSGKSGRRRRERRST). A compositionally biased stretch (basic and acidic residues) spans 76 to 90 (QEKQKLNKGGWDHGD). Phosphoserine occurs at positions 93, 138, 145, and 161. A Phosphothreonine modification is found at threonine 162. At serine 215 the chain carries Phosphoserine. At arginine 320 the chain carries Asymmetric dimethylarginine. Phosphoserine is present on residues serine 322, serine 327, serine 330, serine 338, serine 339, serine 341, and serine 342. Disordered stretches follow at residues 332–869 (RSLG…APSS) and 885–1035 (SEGL…KELA). The span at 338–365 (SSVSSPQPRSRHPSSSSDTWSHSQSSDT) shows a compositional bias: low complexity. The span at 366–388 (IVSDGSTLSSKGGSEGQPESSTA) shows a compositional bias: polar residues. Phosphoserine is present on residues serine 400, serine 404, and serine 409. A compositionally biased stretch (polar residues) spans 411–429 (AEASDTLSIRSSGQLSGRS). Basic residues predominate over residues 431–449 (SLRKLKRPPPPPRRTHSLH). The segment covering 517–532 (RTLSPSSGYSSQSGTP) has biased composition (low complexity). Phosphothreonine is present on threonine 531. The segment covering 543–552 (PASPGKAQPP) has biased composition (pro residues). Residue serine 545 is modified to Phosphoserine. Residues 562–589 (SPGASVSSSLTSLCSSSSDPAPSDRSGP) are compositionally biased toward low complexity. The residue at position 593 (threonine 593) is a Phosphothreonine. A compositionally biased stretch (pro residues) spans 602-624 (PPHPKVPAPFSPPPSKPRSPNPA). The residue at position 612 (serine 612) is a Phosphoserine. 2 stretches are compositionally biased toward low complexity: residues 625-645 (APALAAPAVVPGPVSTTDASP) and 652-662 (QTTLTPLQESP). 2 positions are modified to phosphoserine: serine 669 and serine 673. Pro residues-rich tracts occupy residues 669 to 685 (SPPPSPPPSYHPPPPPT) and 709 to 718 (NWPPPPPPAP). Positions 737–765 (SVASPEPAGPSGSPELVSSPAASSSSATA) are enriched in low complexity. Over residues 771–784 (PGSPDPPPAPPAPA) the composition is skewed to pro residues. Residues 838-848 (GAPTPALGPSA) show a composition bias toward low complexity. Residues serine 858, serine 862, and serine 868 each carry the phosphoserine modification. A compositionally biased stretch (pro residues) spans 894–906 (NGPPEAEPRPPQS). Serine 929, serine 959, serine 971, and serine 979 each carry phosphoserine. The segment covering 961–980 (KAPPPVARKPSVGVPPPASP) has biased composition (pro residues). Positions 999–1008 (TQDRTKRELA) are enriched in basic and acidic residues.

In terms of tissue distribution, expressed in lung.

Able to directly activate the TNF-NFkappaB signaling pathway. The protein is NHS-like protein 3 of Homo sapiens (Human).